The primary structure comprises 191 residues: Protein Ves (191 aa).

Belongs to the Ves family.

The chain is Protein Ves from Escherichia coli O127:H6 (strain E2348/69 / EPEC).